The chain runs to 129 residues: Follitropin subunit beta (129 aa).

An N-terminal signal peptide occupies residues 1 to 20 (MKSLQFCFLFCCWKAICCNS). Disulfide bonds link C21–C69, C35–C84, C38–C122, C46–C100, C50–C102, and C105–C112. N-linked (GlcNAc...) asparagine glycans are attached at residues N25 and N42.

Belongs to the glycoprotein hormones subunit beta family. As to quaternary structure, heterodimer. The active follitropin is a heterodimer composed of an alpha chain/CGA shared with other hormones and a unique beta chain/FSHB shown here.

It is found in the secreted. Functionally, together with the alpha chain CGA constitutes follitropin, the follicle-stimulating hormone, and provides its biological specificity to the hormone heterodimer. Binds FSHR, a G protein-coupled receptor, on target cells to activate downstream signaling pathways. Follitropin is involved in follicle development and spermatogenesis in reproductive organs. In Sus scrofa (Pig), this protein is Follitropin subunit beta (FSHB).